The primary structure comprises 219 residues: 7-cyano-7-deazaguanine synthase (219 aa).

9 to 19 (YSGGMDSFTVL) contacts ATP. Positions 185, 193, 196, and 199 each coordinate Zn(2+).

Belongs to the QueC family. The cofactor is Zn(2+).

The catalysed reaction is 7-carboxy-7-deazaguanine + NH4(+) + ATP = 7-cyano-7-deazaguanine + ADP + phosphate + H2O + H(+). The protein operates within purine metabolism; 7-cyano-7-deazaguanine biosynthesis. Catalyzes the ATP-dependent conversion of 7-carboxy-7-deazaguanine (CDG) to 7-cyano-7-deazaguanine (preQ(0)). The sequence is that of 7-cyano-7-deazaguanine synthase from Marinomonas sp. (strain MWYL1).